The chain runs to 228 residues: 2,3-bisphosphoglycerate-dependent phosphoglycerate mutase (228 aa).

Residues 8–15 (RHGQSQWN), 21–22 (TG), Arg-60, 87–90 (ERHY), Lys-98, 114–115 (RR), and 180–181 (GN) contribute to the substrate site. His-9 functions as the Tele-phosphohistidine intermediate in the catalytic mechanism. The active-site Proton donor/acceptor is Glu-87.

The protein belongs to the phosphoglycerate mutase family. BPG-dependent PGAM subfamily. In terms of assembly, homodimer.

It catalyses the reaction (2R)-2-phosphoglycerate = (2R)-3-phosphoglycerate. It functions in the pathway carbohydrate degradation; glycolysis; pyruvate from D-glyceraldehyde 3-phosphate: step 3/5. Its function is as follows. Catalyzes the interconversion of 2-phosphoglycerate and 3-phosphoglycerate. This Sphingopyxis alaskensis (strain DSM 13593 / LMG 18877 / RB2256) (Sphingomonas alaskensis) protein is 2,3-bisphosphoglycerate-dependent phosphoglycerate mutase.